Consider the following 136-residue polypeptide: Small ribosomal subunit protein uS8 (136 aa).

It belongs to the universal ribosomal protein uS8 family. As to quaternary structure, part of the 30S ribosomal subunit. Contacts proteins S5 and S12.

In terms of biological role, one of the primary rRNA binding proteins, it binds directly to 16S rRNA central domain where it helps coordinate assembly of the platform of the 30S subunit. In Sulfurihydrogenibium sp. (strain YO3AOP1), this protein is Small ribosomal subunit protein uS8.